A 1650-amino-acid chain; its full sequence is HEAT repeat-containing protein 1 homolog (1650 aa).

The disordered stretch occupies residues 1183–1210 (QYDSAASPGSSVAGGRGNRGHRIRQQSL). Residues 1609 to 1645 (LLPFLNELIEDENKQVEAQCQKVINSLQHKFGETFWS) form an HEAT repeat.

This sequence belongs to the HEATR1/UTP10 family.

Its subcellular location is the nucleus. The protein resides in the nucleolus. Involved in nucleolar processing of pre-18S ribosomal RNA. Involved in ribosome biosynthesis. This is HEAT repeat-containing protein 1 homolog (toe-1) from Caenorhabditis elegans.